We begin with the raw amino-acid sequence, 1050 residues long: Antibiotic efflux pump membrane transporter ArpB (1050 aa).

The next 12 helical transmembrane spans lie at 10–30 (IFAW…ILKL), 339–359 (GVIH…YLFL), 370–390 (MTVP…GFSI), 393–413 (LTMF…IVVV), 440–460 (GALV…AFFG), 472–492 (ITIV…TPAL), 539–559 (VPFL…FARI), 871–891 (MPAL…ALYE), 893–913 (WSIP…ALIA), 923–943 (VYFL…AILI), 972–992 (IIMT…ASGA), and 1004–1024 (VIGG…LFFV).

The protein belongs to the resistance-nodulation-cell division (RND) (TC 2.A.6) family.

The protein resides in the cell inner membrane. In terms of biological role, the inner membrane transporter component of an antibiotic efflux pump. Confers resistance to numerous structurally unrelated antibiotics such as carbenicillin, chloramphenicol, erythromycin, novobiocin, streptomycin and tetracycline. Is not involved in organic solvent efflux. This Pseudomonas putida (Arthrobacter siderocapsulatus) protein is Antibiotic efflux pump membrane transporter ArpB (arpB).